A 300-amino-acid chain; its full sequence is NAD kinase (300 aa).

The Proton acceptor role is filled by D75. NAD(+) is bound by residues D75 to G76, N149 to D150, R177, D179, T190 to S195, A214, and Q248.

This sequence belongs to the NAD kinase family. It depends on a divalent metal cation as a cofactor.

Its subcellular location is the cytoplasm. The enzyme catalyses NAD(+) + ATP = ADP + NADP(+) + H(+). In terms of biological role, involved in the regulation of the intracellular balance of NAD and NADP, and is a key enzyme in the biosynthesis of NADP. Catalyzes specifically the phosphorylation on 2'-hydroxyl of the adenosine moiety of NAD to yield NADP. The polypeptide is NAD kinase (Burkholderia pseudomallei (strain K96243)).